A 72-amino-acid polypeptide reads, in one-letter code: Large ribosomal subunit protein bL31 (72 aa).

4 residues coordinate Zn(2+): Cys-16, Cys-18, Cys-37, and Cys-40.

This sequence belongs to the bacterial ribosomal protein bL31 family. Type A subfamily. Part of the 50S ribosomal subunit. The cofactor is Zn(2+).

Binds the 23S rRNA. This is Large ribosomal subunit protein bL31 from Hahella chejuensis (strain KCTC 2396).